Here is a 465-residue protein sequence, read N- to C-terminus: Iron-sulfur cluster assembly SufBD family protein SE_0610 (465 aa).

Belongs to the iron-sulfur cluster assembly SufBD family.

The chain is Iron-sulfur cluster assembly SufBD family protein SE_0610 from Staphylococcus epidermidis (strain ATCC 12228 / FDA PCI 1200).